Reading from the N-terminus, the 235-residue chain is Ubiquinone biosynthesis O-methyltransferase (235 aa).

Residues R39, G59, D80, and M124 each coordinate S-adenosyl-L-methionine.

This sequence belongs to the methyltransferase superfamily. UbiG/COQ3 family.

The catalysed reaction is a 3-demethylubiquinol + S-adenosyl-L-methionine = a ubiquinol + S-adenosyl-L-homocysteine + H(+). It carries out the reaction a 3-(all-trans-polyprenyl)benzene-1,2-diol + S-adenosyl-L-methionine = a 2-methoxy-6-(all-trans-polyprenyl)phenol + S-adenosyl-L-homocysteine + H(+). The protein operates within cofactor biosynthesis; ubiquinone biosynthesis. Functionally, O-methyltransferase that catalyzes the 2 O-methylation steps in the ubiquinone biosynthetic pathway. The polypeptide is Ubiquinone biosynthesis O-methyltransferase (Vibrio parahaemolyticus serotype O3:K6 (strain RIMD 2210633)).